A 144-amino-acid chain; its full sequence is YECGPLQRLKVKRQWAEAYGSGNDREEFGHFIWTHVFKDAPSARDLFKRVRGDNIHTPAFRAHATRVLGGLDMCIALLDDEGVLNTQLAHLASQHSSRGVSAAQYDVVEHSVMMGVEHEIGQNVFDKDAWQACLDVITGGIQGN.

Residues 2-144 (ECGPLQRLKV…DVITGGIQGN (143 aa)) enclose the Globin domain. Position 95 (His95) interacts with heme b.

Belongs to the globin family. In terms of assembly, giant hemoglobin is composed of four heme-containing chains (AI to AIV), and two linker chains (AV and AVI).

The protein is Giant hemoglobin AIII chain of Lamellibrachia sp. (Deep-sea giant tube worm).